A 248-amino-acid polypeptide reads, in one-letter code: 4-hydroxy-tetrahydrodipicolinate reductase (248 aa).

Residues 74–76 (GTT) and 99–102 (SANF) contribute to the NAD(+) site. H134 acts as the Proton donor/acceptor in catalysis. H135 contacts (S)-2,3,4,5-tetrahydrodipicolinate. K138 (proton donor) is an active-site residue. Residue 144-145 (GT) coordinates (S)-2,3,4,5-tetrahydrodipicolinate.

It belongs to the DapB family.

The protein localises to the cytoplasm. The catalysed reaction is (S)-2,3,4,5-tetrahydrodipicolinate + NAD(+) + H2O = (2S,4S)-4-hydroxy-2,3,4,5-tetrahydrodipicolinate + NADH + H(+). It carries out the reaction (S)-2,3,4,5-tetrahydrodipicolinate + NADP(+) + H2O = (2S,4S)-4-hydroxy-2,3,4,5-tetrahydrodipicolinate + NADPH + H(+). It participates in amino-acid biosynthesis; L-lysine biosynthesis via DAP pathway; (S)-tetrahydrodipicolinate from L-aspartate: step 4/4. Catalyzes the conversion of 4-hydroxy-tetrahydrodipicolinate (HTPA) to tetrahydrodipicolinate. This Chlorobium phaeobacteroides (strain DSM 266 / SMG 266 / 2430) protein is 4-hydroxy-tetrahydrodipicolinate reductase.